We begin with the raw amino-acid sequence, 467 residues long: Protein CitXG (467 aa).

The interval 1–178 (MDYFEGGERL…NKMLHNFEKS (178 aa)) is apo-citrate lyase phosphoribosyl-dephospho-CoA transferase. Residues 179–467 (KMIVPQMTQS…IFLARLVGSL (289 aa)) form a 2-(5''-triphosphoribosyl)-3'-dephosphocoenzyme-A synthase region.

This sequence in the N-terminal section; belongs to the CitX family. It in the C-terminal section; belongs to the CitG/MdcB family.

The catalysed reaction is apo-[citrate lyase ACP] + 2'-(5''-triphospho-alpha-D-ribosyl)-3'-dephospho-CoA = holo-[citrate lyase ACP] + diphosphate. It catalyses the reaction 3'-dephospho-CoA + ATP = 2'-(5''-triphospho-alpha-D-ribosyl)-3'-dephospho-CoA + adenine. Functionally, bifunctional enzyme that catalyzes formation of 2-(5''-triphosphoribosyl)-3'-dephosphocoenzyme-A, and then the transfer of this prosthetic group precursor to the apo-acyl carrier protein (gamma chain) of the citrate lyase to yield the holo-acyl carrier protein. This is Protein CitXG (citXG) from Leuconostoc mesenteroides subsp. cremoris.